The following is a 362-amino-acid chain: Peptide chain release factor 1 (362 aa).

Residue Gln-240 is modified to N5-methylglutamine.

Belongs to the prokaryotic/mitochondrial release factor family. In terms of processing, methylated by PrmC. Methylation increases the termination efficiency of RF1.

It localises to the cytoplasm. In terms of biological role, peptide chain release factor 1 directs the termination of translation in response to the peptide chain termination codons UAG and UAA. The polypeptide is Peptide chain release factor 1 (Bifidobacterium longum subsp. infantis (strain ATCC 15697 / DSM 20088 / JCM 1222 / NCTC 11817 / S12)).